The sequence spans 463 residues: Metacaspase-1 (463 aa).

The segment at 1 to 149 is disordered; it reads MSWNQYPGGG…PQLQGQGGQS (149 aa). The span at 7–18 shows a compositional bias: gly residues; it reads PGGGHHQQGGYG. Positions 20 to 56 are enriched in pro residues; sequence RPPPPQWAQQGPPPPPNMGYRPPPPPQAYYNNPPPPQ. A compositionally biased stretch (low complexity) spans 57-83; that stretch reads QYQRPAPQQNGYQQGGYQQQQQSQGNY. Catalysis depends on residues histidine 247 and cysteine 309.

It belongs to the peptidase C14B family.

Its function is as follows. Involved in cell death (apoptosis). The chain is Metacaspase-1 (MCA1) from Cryptococcus neoformans var. neoformans serotype D (strain B-3501A) (Filobasidiella neoformans).